Consider the following 184-residue polypeptide: Photosystem I assembly protein Ycf4 (184 aa).

2 consecutive transmembrane segments (helical) span residues 22–42 (FFWAFILFLGSLGFLLVGTSS) and 57–77 (IIFFPQGIVMSFYGIAGLFIS).

The protein belongs to the Ycf4 family.

It is found in the plastid. Its subcellular location is the chloroplast thylakoid membrane. Functionally, seems to be required for the assembly of the photosystem I complex. In Aethionema cordifolium (Lebanon stonecress), this protein is Photosystem I assembly protein Ycf4.